A 908-amino-acid chain; its full sequence is Putative cell signaling protein HAM1 (908 aa).

2 disordered regions span residues 1–24 (MSVAATKSEISHNPGKMSVTSAVS) and 177–359 (TKAA…EHRQ). Composition is skewed to basic and acidic residues over residues 179-192 (AADKSRPSQEKLDS), 231-247 (HPRDDPRDAQLVDDKGK), 261-283 (AKSDAQSKAQDLKSSARDYKETG), 306-321 (EQKEQVKGAAYDKRDA), and 338-359 (NQEKARGKAAALRDRIPEEHRQ). Residues 255 to 282 (YNQAQEAKSDAQSKAQDLKSSARDYKET) adopt a coiled-coil conformation.

In terms of processing, palmitoylated.

In terms of biological role, may act as a negative regulator of mating during vegetative growth. The polypeptide is Putative cell signaling protein HAM1 (Cryptococcus neoformans var. grubii serotype A (strain H99 / ATCC 208821 / CBS 10515 / FGSC 9487) (Filobasidiella neoformans var. grubii)).